We begin with the raw amino-acid sequence, 129 residues long: Small ribosomal subunit protein uS11 (129 aa).

Belongs to the universal ribosomal protein uS11 family. As to quaternary structure, part of the 30S ribosomal subunit. Interacts with proteins S7 and S18. Binds to IF-3.

Its function is as follows. Located on the platform of the 30S subunit, it bridges several disparate RNA helices of the 16S rRNA. Forms part of the Shine-Dalgarno cleft in the 70S ribosome. The chain is Small ribosomal subunit protein uS11 from Bacteroides thetaiotaomicron (strain ATCC 29148 / DSM 2079 / JCM 5827 / CCUG 10774 / NCTC 10582 / VPI-5482 / E50).